We begin with the raw amino-acid sequence, 724 residues long: Catalase-peroxidase (724 aa).

The tryptophyl-tyrosyl-methioninium (Trp-Tyr) (with M-252) cross-link spans 98–226 (WHSAGSYRLA…LAAVQMGLIY (129 aa)). Histidine 99 functions as the Proton acceptor in the catalytic mechanism. The tryptophyl-tyrosyl-methioninium (Tyr-Met) (with W-98) cross-link spans 226–252 (YVNPEGVNGKPDPLKTAAQVRTTFARM). Histidine 267 is a heme b binding site.

It belongs to the peroxidase family. Peroxidase/catalase subfamily. In terms of assembly, homodimer or homotetramer. The cofactor is heme b. Formation of the three residue Trp-Tyr-Met cross-link is important for the catalase, but not the peroxidase activity of the enzyme.

The catalysed reaction is H2O2 + AH2 = A + 2 H2O. It catalyses the reaction 2 H2O2 = O2 + 2 H2O. Functionally, bifunctional enzyme with both catalase and broad-spectrum peroxidase activity. The sequence is that of Catalase-peroxidase from Maricaulis maris (strain MCS10) (Caulobacter maris).